A 388-amino-acid polypeptide reads, in one-letter code: Probable pectin lyase F-1 (388 aa).

A signal peptide spans 1–19 (MKTATFSTLLALSASAVNA). An intrachain disulfide couples Cys80 to Cys103. A glycan (N-linked (GlcNAc...) asparagine) is linked at Asn126. Arg253 is a catalytic residue. Cys328 and Cys336 form a disulfide bridge.

This sequence belongs to the polysaccharide lyase 1 family.

It localises to the secreted. It catalyses the reaction Eliminative cleavage of (1-&gt;4)-alpha-D-galacturonan methyl ester to give oligosaccharides with 4-deoxy-6-O-methyl-alpha-D-galact-4-enuronosyl groups at their non-reducing ends.. Its function is as follows. Pectinolytic enzymes consist of four classes of enzymes: pectin lyase, polygalacturonase, pectin methylesterase and rhamnogalacturonase. Among pectinolytic enzymes, pectin lyase is the most important in depolymerization of pectin, since it cleaves internal glycosidic bonds of highly methylated pectins. In Aspergillus terreus (strain NIH 2624 / FGSC A1156), this protein is Probable pectin lyase F-1 (pelF-1).